A 491-amino-acid chain; its full sequence is Chromosomal replication initiator protein DnaA (491 aa).

The segment at 1–69 is domain I, interacts with DnaA modulators; sequence MTTWDKCLKK…TIQECHGNDL (69 aa). A domain II region spans residues 69–154; it reads LIIEYSNKKF…KEDEEYSFGL (86 aa). The domain III, AAA+ region stretch occupies residues 155-371; that stretch reads PLKEKYVFDS…GALNRVLTTS (217 aa). Residues G199, G201, K202, and T203 each coordinate ATP. The segment at 372 to 491 is domain IV, binds dsDNA; it reads KFNHKDPTIE…YELLLDKISR (120 aa).

This sequence belongs to the DnaA family. In terms of assembly, oligomerizes as a right-handed, spiral filament on DNA at oriC.

The protein resides in the cytoplasm. In terms of biological role, plays an essential role in the initiation and regulation of chromosomal replication. ATP-DnaA binds to the origin of replication (oriC) to initiate formation of the DNA replication initiation complex once per cell cycle. Binds the DnaA box (a 9 base pair repeat at the origin) and separates the double-stranded (ds)DNA. Forms a right-handed helical filament on oriC DNA; dsDNA binds to the exterior of the filament while single-stranded (ss)DNA is stabiized in the filament's interior. The ATP-DnaA-oriC complex binds and stabilizes one strand of the AT-rich DNA unwinding element (DUE), permitting loading of DNA polymerase. After initiation quickly degrades to an ADP-DnaA complex that is not apt for DNA replication. Binds acidic phospholipids. The chain is Chromosomal replication initiator protein DnaA from Francisella tularensis subsp. holarctica (strain LVS).